The following is a 449-amino-acid chain: Trigger factor (449 aa).

A PPIase FKBP-type domain is found at 160 to 231; the sequence is TDQVTIEELG…VQSVQTKQLQ (72 aa). Positions 411-449 are disordered; that stretch reads GQQVAGRQEAGAEQTAQAAEQESGQPQAEGEQAAEQRGE. Residues 415–443 are compositionally biased toward low complexity; that stretch reads AGRQEAGAEQTAQAAEQESGQPQAEGEQA.

Belongs to the FKBP-type PPIase family. Tig subfamily.

It is found in the cytoplasm. It carries out the reaction [protein]-peptidylproline (omega=180) = [protein]-peptidylproline (omega=0). Its function is as follows. Involved in protein export. Acts as a chaperone by maintaining the newly synthesized protein in an open conformation. Functions as a peptidyl-prolyl cis-trans isomerase. This is Trigger factor from Deinococcus geothermalis (strain DSM 11300 / CIP 105573 / AG-3a).